The chain runs to 156 residues: SsrA-binding protein (156 aa).

Residues 134–156 are disordered; the sequence is RQTLREQQDKRESLRELRERNRR.

It belongs to the SmpB family.

The protein localises to the cytoplasm. Functionally, required for rescue of stalled ribosomes mediated by trans-translation. Binds to transfer-messenger RNA (tmRNA), required for stable association of tmRNA with ribosomes. tmRNA and SmpB together mimic tRNA shape, replacing the anticodon stem-loop with SmpB. tmRNA is encoded by the ssrA gene; the 2 termini fold to resemble tRNA(Ala) and it encodes a 'tag peptide', a short internal open reading frame. During trans-translation Ala-aminoacylated tmRNA acts like a tRNA, entering the A-site of stalled ribosomes, displacing the stalled mRNA. The ribosome then switches to translate the ORF on the tmRNA; the nascent peptide is terminated with the 'tag peptide' encoded by the tmRNA and targeted for degradation. The ribosome is freed to recommence translation, which seems to be the essential function of trans-translation. The sequence is that of SsrA-binding protein from Paenarthrobacter aurescens (strain TC1).